Here is a 595-residue protein sequence, read N- to C-terminus: Estrogen receptor (595 aa).

Positions 1–184 (MTMTLHTKAS…AMESVKETRY (184 aa)) are modulating(transactivation AF-1); mediates interaction with MACROD1. An O-linked (GlcNAc) serine glycan is attached at S10. The segment at 35–47 (LERALSEVYVDSS) is required for interaction with NCOA1. The segment at 35–174 (LERALSEVYV…LSSSSEKGSM (140 aa)) is interaction with DDX5; self-association. A phosphoserine; by CDK2 mark is found at S103 and S105. S118 carries the phosphoserine modification. The disordered stretch occupies residues 143–174 (DSGPPAFYRSNSDNRRQSGRERLSSSSEKGSM). A compositionally biased stretch (basic and acidic residues) spans 154 to 165 (SDNRRQSGRERL). Position 167 is a phosphoserine; by CK2 (S167). 2 consecutive NR C4-type zinc fingers follow at residues 185 to 205 (CAVCNDYASGYHYGVWSCEGC) and 221 to 245 (CPATNQCTIDKNRRKSCQACRLRKC). A DNA-binding region (nuclear receptor) is located at residues 185–250 (CAVCNDYASG…RLRKCYEVGM (66 aa)). The segment at 185-310 (CAVCNDYASG…TKKNSPALSL (126 aa)) is mediates interaction with DNTTIP2. Positions 251 to 310 (MKGGIRKDRRGGRMLKHKRQRDDLEGRNDMGPSGDMRATNLWPSPLVIKHTKKNSPALSL) are hinge. An Asymmetric dimethylarginine; by PRMT1 modification is found at R260. Basic residues predominate over residues 260–269 (RGGRMLKHKR). Positions 260–285 (RGGRMLKHKRQRDDLEGRNDMGPSGD) are disordered. An interaction with AKAP13 region spans residues 262–595 (GRMLKHKRQR…SEAESFPNTI (334 aa)). The self-association stretch occupies residues 264–595 (MLKHKRQRDD…SEAESFPNTI (332 aa)). The NR LBD domain occupies 311–547 (TADQMVSALL…DLLLEMLDAH (237 aa)). Residues 311–595 (TADQMVSALL…SEAESFPNTI (285 aa)) are transactivation AF-2. Residues E353 and R394 each coordinate 17beta-estradiol. Residue C447 is the site of S-palmitoyl cysteine attachment. H524 is a 17beta-estradiol binding site. Y537 bears the Phosphotyrosine; by Tyr-kinases mark. Residues 554–578 (SRMGVSPEEPSQSQLTTTNSTSSHS) form a disordered region. Residues 564-578 (SQSQLTTTNSTSSHS) show a composition bias toward low complexity. O-linked (GlcNAc) threonine glycosylation is present at T571.

The protein belongs to the nuclear hormone receptor family. NR3 subfamily. As to quaternary structure, binds DNA as a homodimer. Can form a heterodimer with ESR2. Interacts with coactivator NCOA5. Interacts with PELP1, the interaction is enhanced by 17-beta-estradiol; the interaction increases ESR1 transcriptional activity. Interacts with NCOA7; the interaction is ligand-inducible. Interacts with AKAP13, CUEDC2, HEXIM1, KDM5A, MAP1S, SMARD1, and UBE1C. Interacts with MUC1; the interaction is stimulated by 7 beta-estradiol (E2) and enhances ESR1-mediated transcription. Interacts with DNTTIP2, and UIMC1. Interacts with KMT2D/MLL2. Interacts with ATAD2; the interaction is enhanced by estradiol. Interacts with KIF18A and LDB1. Interacts with RLIM (via its C-terminus). Interacts with MACROD1. Interacts with SH2D4A and PLCG. Interacts with SH2D4A; the interaction blocks binding to PLCG and inhibits estrogen-induced cell proliferation. Interacts with DYNLL1. Interacts with CCDC62; the interaction requires estradiol and appears to enhance the transcription of target genes. Interacts with NR2C1; the interaction prevents homodimerization of ESR1 and suppresses its transcriptional activity and cell growth. Interacts with DNAAF4. Interacts with PRMT2. Interacts with RBFOX2. Interacts with EP300; the interaction is estrogen-dependent and enhanced by CITED1. Interacts with CITED1; the interaction is estrogen-dependent. Interacts with FAM120B, FOXL2, PHB2 and SLC30A9. Interacts with coactivators NCOA3 and NCOA6. Interacts with STK3/MST2 only in the presence of SAV1 and vice-versa. Binds to CSNK1D. Interacts with NCOA2; NCOA2 can interact with ESR1 AF-1 and AF-2 domains simultaneously and mediate their transcriptional synergy. Interacts with DDX5. Interacts with NCOA1; the interaction seems to require a self-association of N-terminal and C-terminal regions. Interacts with ZNF366, DDX17, NFKB1, RELA, SP1 and SP3. Interacts with NRIP1. Interacts with GPER1; the interaction occurs in an estrogen-dependent manner. Interacts with CLOCK and the interaction is stimulated by estrogen. Interacts with TRIP4 (ufmylated); estrogen dependent. Interacts with LMTK3; the interaction phosphorylates ESR1 (in vitro) and protects it against proteasomal degradation. Interacts with CCAR2 (via N-terminus) in a ligand-independent manner. Interacts with ZFHX3. Interacts with SFR1 in a ligand-dependent and -independent manner. Interacts with DCAF13, LATS1 and DCAF1; regulates ESR1 ubiquitination and ubiquitin-mediated proteasomal degradation. Interacts (via DNA-binding domain) with POU4F2 (C-terminus); this interaction increases the estrogen receptor ESR1 transcriptional activity in a DNA- and ligand 17-beta-estradiol-independent manner. Interacts with ESRRB isoform 1. Interacts with UBE3A and WBP2. Interacts with GTF2B. Interacts with RBM39. In the absence of hormonal ligand, interacts with TACC1. Interacts with PI3KR1 or PI3KR2 and PTK2/FAK1. Interacts with SRC. Interacts with BAG1; the interaction is promoted in the absence of estradiol (17-beta-estradiol/E2). Interacts with and ubiquitinated by STUB1; the interaction is promoted in the absence of estradiol (17-beta-estradiol/E2). Interacts with NEDD8. In terms of processing, ubiquitinated; regulated by LATS1 via DCAF1 it leads to ESR1 proteasomal degradation. Deubiquitinated by OTUB1. Ubiquitinated by STUB1/CHIP; in the CA1 hippocampal region following loss of endogenous circulating estradiol (17-beta-estradiol/E2). Ubiquitinated by UBR5, leading to its degradation: UBR5 specifically recognizes and binds ligand-bound ESR1 when it is not associated with coactivators (NCOAs). In presence of NCOAs, the UBR5-degron is not accessible, preventing its ubiquitination and degradation. Post-translationally, phosphorylated by cyclin A/CDK2 and CK1. Phosphorylation probably enhances transcriptional activity. Dephosphorylation at Ser-118 by PPP5C inhibits its transactivation activity. Phosphorylated by LMTK3 (in vitro). Palmitoylated at Cys-447 by ZDHHC7 and ZDHHC21. Palmitoylation is required for plasma membrane targeting and for rapid intracellular signaling via ERK and AKT kinases and cAMP generation, but not for signaling mediated by the nuclear hormone receptor. In terms of processing, dimethylated by PRMT1 at Arg-260. The methylation may favor cytoplasmic localization. Demethylated by JMJD6 at Arg-260.

The protein localises to the nucleus. It localises to the cytoplasm. It is found in the golgi apparatus. The protein resides in the cell membrane. Nuclear hormone receptor. The steroid hormones and their receptors are involved in the regulation of eukaryotic gene expression and affect cellular proliferation and differentiation in target tissues. Ligand-dependent nuclear transactivation involves either direct homodimer binding to a palindromic estrogen response element (ERE) sequence or association with other DNA-binding transcription factors, such as AP-1/c-Jun, c-Fos, ATF-2, Sp1 and Sp3, to mediate ERE-independent signaling. Ligand binding induces a conformational change allowing subsequent or combinatorial association with multiprotein coactivator complexes through LXXLL motifs of their respective components. Mutual transrepression occurs between the estrogen receptor (ER) and NF-kappa-B in a cell-type specific manner. Decreases NF-kappa-B DNA-binding activity and inhibits NF-kappa-B-mediated transcription from the IL6 promoter and displace RELA/p65 and associated coregulators from the promoter. Recruited to the NF-kappa-B response element of the CCL2 and IL8 promoters and can displace CREBBP. Present with NF-kappa-B components RELA/p65 and NFKB1/p50 on ERE sequences. Can also act synergistically with NF-kappa-B to activate transcription involving respective recruitment adjacent response elements; the function involves CREBBP. Can activate the transcriptional activity of TFF1. Also mediates membrane-initiated estrogen signaling involving various kinase cascades. Essential for MTA1-mediated transcriptional regulation of BRCA1 and BCAS3. Maintains neuronal survival in response to ischemic reperfusion injury when in the presence of circulating estradiol (17-beta-estradiol/E2). This is Estrogen receptor (ESR1) from Mesocricetus auratus (Golden hamster).